Reading from the N-terminus, the 432-residue chain is Tol-Pal system protein TolB (432 aa).

An N-terminal signal peptide occupies residues Met1–Ala21.

This sequence belongs to the TolB family. The Tol-Pal system is composed of five core proteins: the inner membrane proteins TolA, TolQ and TolR, the periplasmic protein TolB and the outer membrane protein Pal. They form a network linking the inner and outer membranes and the peptidoglycan layer.

Its subcellular location is the periplasm. Functionally, part of the Tol-Pal system, which plays a role in outer membrane invagination during cell division and is important for maintaining outer membrane integrity. The chain is Tol-Pal system protein TolB from Pseudomonas aeruginosa (strain ATCC 15692 / DSM 22644 / CIP 104116 / JCM 14847 / LMG 12228 / 1C / PRS 101 / PAO1).